Consider the following 250-residue polypeptide: 5'-nucleotidase SurE (250 aa).

Residues D8, D9, S40, and N94 each contribute to the a divalent metal cation site.

It belongs to the SurE nucleotidase family. A divalent metal cation serves as cofactor.

The protein resides in the cytoplasm. The enzyme catalyses a ribonucleoside 5'-phosphate + H2O = a ribonucleoside + phosphate. Its function is as follows. Nucleotidase that shows phosphatase activity on nucleoside 5'-monophosphates. In Wolbachia pipientis wMel, this protein is 5'-nucleotidase SurE.